The following is a 206-amino-acid chain: dTTP/UTP pyrophosphatase (206 aa).

The active-site Proton acceptor is Asp-87.

The protein belongs to the Maf family. YhdE subfamily. Requires a divalent metal cation as cofactor.

Its subcellular location is the cytoplasm. The catalysed reaction is dTTP + H2O = dTMP + diphosphate + H(+). The enzyme catalyses UTP + H2O = UMP + diphosphate + H(+). Its function is as follows. Nucleoside triphosphate pyrophosphatase that hydrolyzes dTTP and UTP. May have a dual role in cell division arrest and in preventing the incorporation of modified nucleotides into cellular nucleic acids. In Aromatoleum aromaticum (strain DSM 19018 / LMG 30748 / EbN1) (Azoarcus sp. (strain EbN1)), this protein is dTTP/UTP pyrophosphatase.